We begin with the raw amino-acid sequence, 1848 residues long: Chitin synthase E (1848 aa).

Residues 1–17 (MAAPSPAGGAPSHAQSS) show a composition bias toward low complexity. The interval 1 to 22 (MAAPSPAGGAPSHAQSSLPSLP) is disordered. The Myosin motor domain occupies 1–779 (MAAPSPAGGA…CWADLAKVGE (779 aa)). Position 102-109 (102-109 (GESGSGKT)) interacts with ATP. The segment at 593-621 (SSKPLRMPSMARRKTSPSSRLAFDAGDAD) is disordered. The segment at 659 to 683 (LDIVNKCLSSTNLNPYFIFCLKPND) is actin-binding. Helical transmembrane passes span 889–909 (WIAL…KLFG) and 928–948 (LIIW…PGLV). The Cytochrome b5 heme-binding domain maps to 952 to 1040 (QHVYSAAELS…LLDYRPTNIS (89 aa)). Asn1038 and Asn1063 each carry an N-linked (GlcNAc...) asparagine glycan. A helical membrane pass occupies residues 1200–1220 (FILAISVLICSIIVFKFLAAL). Residues Asn1423, Asn1457, and Asn1563 are each glycosylated (N-linked (GlcNAc...) asparagine). 3 consecutive transmembrane segments (helical) span residues 1595-1615 (LSTV…YWLV), 1621-1641 (IPYT…LIFI), and 1648-1668 (MVGW…ALPL). Asn1786 carries N-linked (GlcNAc...) asparagine glycosylation. In terms of domain architecture, DEK-C spans 1790-1845 (LPSDDAILAEIREILRTADLMSVTKKSIKLELERRFGVNLDLKRPYINSATEAVLA).

This sequence in the N-terminal section; belongs to the TRAFAC class myosin-kinesin ATPase superfamily. Myosin family. The protein in the C-terminal section; belongs to the chitin synthase family. Class V subfamily.

It is found in the cell membrane. It localises to the cell septum. Its subcellular location is the cell tip. It catalyses the reaction [(1-&gt;4)-N-acetyl-beta-D-glucosaminyl](n) + UDP-N-acetyl-alpha-D-glucosamine = [(1-&gt;4)-N-acetyl-beta-D-glucosaminyl](n+1) + UDP + H(+). Polymerizes chitin, a structural polymer of the cell wall and septum, by transferring the sugar moiety of UDP-GlcNAc to the non-reducing end of the growing chitin polymer. Important for hyphal growth and conidiophore development but not pathogenicity. The sequence is that of Chitin synthase E from Aspergillus fumigatus (strain ATCC MYA-4609 / CBS 101355 / FGSC A1100 / Af293) (Neosartorya fumigata).